The sequence spans 188 residues: MATYTTSDFKPGLKFMQDGEPCVIVENEFVKPGKGQAFTRTRIRKLISGKVLDVNFKSGTSVEAADVMDLNLTYSYKDDAFWYFMHPETFEQYSADAKAVGDAEKWLLDQADCIVTLWNGAPITVTPPNFVELEIVDTDPGLKGDTAGTGGKPATLSTGAVVKVPLFVQIGEVIRVDTRSGEYVSRVK.

An N6-(3,6-diaminohexanoyl)-5-hydroxylysine modification is found at Lys-34.

The protein belongs to the elongation factor P family. May be beta-lysylated on the epsilon-amino group of Lys-34 by the combined action of EpmA and EpmB, and then hydroxylated on the C5 position of the same residue by EpmC (if this protein is present). Lysylation is critical for the stimulatory effect of EF-P on peptide-bond formation. The lysylation moiety may extend toward the peptidyltransferase center and stabilize the terminal 3-CCA end of the tRNA. Hydroxylation of the C5 position on Lys-34 may allow additional potential stabilizing hydrogen-bond interactions with the P-tRNA.

It is found in the cytoplasm. Its pathway is protein biosynthesis; polypeptide chain elongation. In terms of biological role, involved in peptide bond synthesis. Alleviates ribosome stalling that occurs when 3 or more consecutive Pro residues or the sequence PPG is present in a protein, possibly by augmenting the peptidyl transferase activity of the ribosome. Modification of Lys-34 is required for alleviation. In Haemophilus influenzae (strain 86-028NP), this protein is Elongation factor P.